A 213-amino-acid polypeptide reads, in one-letter code: Uracil phosphoribosyltransferase (213 aa).

Residues Arg-78, Arg-103, and 130–138 (DPMLATGGT) each bind 5-phospho-alpha-D-ribose 1-diphosphate. Residues Ile-197 and 202-204 (GDA) each bind uracil. Residue Asp-203 participates in 5-phospho-alpha-D-ribose 1-diphosphate binding.

Belongs to the UPRTase family. Requires Mg(2+) as cofactor.

The enzyme catalyses UMP + diphosphate = 5-phospho-alpha-D-ribose 1-diphosphate + uracil. It functions in the pathway pyrimidine metabolism; UMP biosynthesis via salvage pathway; UMP from uracil: step 1/1. Allosterically activated by GTP. Catalyzes the conversion of uracil and 5-phospho-alpha-D-ribose 1-diphosphate (PRPP) to UMP and diphosphate. This is Uracil phosphoribosyltransferase from Nocardioides sp. (strain ATCC BAA-499 / JS614).